The chain runs to 275 residues: Dermonecrotic toxin SpeSicTox-betaIIA2v (275 aa).

Residue H5 is part of the active site. Mg(2+)-binding residues include E25 and D27. H41 serves as the catalytic Nucleophile. Cystine bridges form between C45–C51 and C47–C190. D85 is a binding site for Mg(2+).

This sequence belongs to the arthropod phospholipase D family. Class II subfamily. Mg(2+) is required as a cofactor. Expressed by the venom gland.

The protein resides in the secreted. It catalyses the reaction an N-(acyl)-sphingosylphosphocholine = an N-(acyl)-sphingosyl-1,3-cyclic phosphate + choline. The enzyme catalyses an N-(acyl)-sphingosylphosphoethanolamine = an N-(acyl)-sphingosyl-1,3-cyclic phosphate + ethanolamine. The catalysed reaction is a 1-acyl-sn-glycero-3-phosphocholine = a 1-acyl-sn-glycero-2,3-cyclic phosphate + choline. It carries out the reaction a 1-acyl-sn-glycero-3-phosphoethanolamine = a 1-acyl-sn-glycero-2,3-cyclic phosphate + ethanolamine. Dermonecrotic toxins cleave the phosphodiester linkage between the phosphate and headgroup of certain phospholipids (sphingolipid and lysolipid substrates), forming an alcohol (often choline) and a cyclic phosphate. This toxin acts on sphingomyelin (SM). It may also act on ceramide phosphoethanolamine (CPE), lysophosphatidylcholine (LPC) and lysophosphatidylethanolamine (LPE), but not on lysophosphatidylserine (LPS), and lysophosphatidylglycerol (LPG). It acts by transphosphatidylation, releasing exclusively cyclic phosphate products as second products. Induces dermonecrosis, hemolysis, increased vascular permeability, edema, inflammatory response, and platelet aggregation. In Sicarius peruensis (Six-eyed sand spider), this protein is Dermonecrotic toxin SpeSicTox-betaIIA2v.